The chain runs to 1290 residues: MLDVNFFDQLQIGLATADDIRTWSHGEVKKPETINYRTLKPERDGLFCEKIFGPTRDWECYCGKYKRVRFKGIICERCGVEVTRSKVRRERMGHIELAAPVTHIWYFKGVPSRLGYLLDLAPKDLEKVIYFAAYMITAVDEDARHRDLSSLEGKVGLERERLEKRRDQSIDDRAKKLEEDLAALEAEGAKADQRRKVKDGAEREMKQLRDRAQREIDRLDEVWNTFKSLKVQDLMGDEMLYREMKNWFGKYFEGHMGATAIQKRLESFDIEAEVELLRDTIANGKGQRKVRALKRLKVVDAFRKTGNKPQGMVLDAVPVIPPDLRPMVQLDGGRFATSDLNDLYRRVINRNNRLKRLLDLGAPEIIVNNEKRMLQEAVDSLFDNGRRGRPVTGPGNRPLKSLSDMLKGKQGRFRQNLLGKRVDYSGRSVIVSGPQLKLHQCGLPKQMALELFKPFVMKRLVDLSHAQNIKSAKRMVERARPVVWDVLEEVITEHPVLLNRAPTLHRLGIQAFEPQLIEGKAIQIHPLVCSAFNADFDGDQMAVHLPLSAEAQAEARILMLSTNNILKPSDGRPVTMPTQDMIIGLFFLTTDRDGQPGDGRAFASPAEAIMAFDRGEISLQSKVRIRFTDIVPPLELGADWEQGQAVSLETTLGRALFNETLPADYPYVNYEVGKKALGAIVNDLAERYTKVEVAASLDALKDTGFHWATRSGVTVSIDDVTTPGDKADILSGYEAQAAKVQKQFERGLVTDEERRQELIEIWTQASNEVGKAMEANFDRANPIYMMVDSGASGNMNQIRQVAAMRGLVANPKGEIIPRPIKSNFREGLTVLEYFIATHGARKGLADTALRTADSGYLTRRLVDVSQDVIIREDDCGTERGLPKRIGERREDGTVVKAENAETAAYARTSAVDVAHPETGEVLVRAGEDLGDVKIGELISAGVEEVKVRSVLTCDAKTGTCAKCYGRSLATGKLVDIGEAVGIIAAQSIGEPGTQLTMRTFHTGGVASADDITQGLPRVVELFEARSPKGRSPISEAAGRVTIEESDKARKVLITPDDGSEVQEYPVSKRSRLLVGDGDHIEVGQMLTVGTPDPQDVLRILGVRRAQEHLVDEVQAVYRSQGVSIHDKHIEIIVRQMLRRITVIESGDTNLLPSDLVDRVRFEEENRRVVSEGGKPASGRPVLMGITKASLATESWLSAASFQETTRVLTDAAIHGRSDSLRGLKENVIIGKLIPAGTGLERYRNIRVEPTEEARAAAYSVTGYDSYDYEFGNGTGQAVALDDFDFGSYQN.

Zn(2+)-binding residues include C60, C62, C75, and C78. Positions 535, 537, and 539 each coordinate Mg(2+). Zn(2+) contacts are provided by C875, C953, C960, and C963.

The protein belongs to the RNA polymerase beta' chain family. As to quaternary structure, the RNAP catalytic core consists of 2 alpha, 1 beta, 1 beta' and 1 omega subunit. When a sigma factor is associated with the core the holoenzyme is formed, which can initiate transcription. Mg(2+) serves as cofactor. Zn(2+) is required as a cofactor.

The enzyme catalyses RNA(n) + a ribonucleoside 5'-triphosphate = RNA(n+1) + diphosphate. Its function is as follows. DNA-dependent RNA polymerase catalyzes the transcription of DNA into RNA using the four ribonucleoside triphosphates as substrates. This is DNA-directed RNA polymerase subunit beta' from Nocardioides sp. (strain ATCC BAA-499 / JS614).